A 348-amino-acid chain; its full sequence is Phosphate acyltransferase (348 aa).

Belongs to the PlsX family. As to quaternary structure, homodimer. Probably interacts with PlsY.

The protein localises to the cytoplasm. The catalysed reaction is a fatty acyl-[ACP] + phosphate = an acyl phosphate + holo-[ACP]. It participates in lipid metabolism; phospholipid metabolism. In terms of biological role, catalyzes the reversible formation of acyl-phosphate (acyl-PO(4)) from acyl-[acyl-carrier-protein] (acyl-ACP). This enzyme utilizes acyl-ACP as fatty acyl donor, but not acyl-CoA. This is Phosphate acyltransferase from Francisella tularensis subsp. tularensis (strain FSC 198).